The sequence spans 313 residues: MTNVSGVDFQLRSVPLLSRVGADRADRLRTDMEAAAAGWPGAALLRVDSRNRVLVANGRVLLGAAIELADKPPPEAVFLGRVEGGRHVWAVRAALQPIADPDIPAEAVDLRGLGRIMDDTSSQLVSSASALLNWHDNARFSALDGAPTKPARAGWSRVNPITGHEEFPRIDPAVICLVHDGADRAVLARQAAWPERMFSLLAGFVEAGESFEVCVAREIREEIGLTVRDVRYLGSQQWPFPRSLMVGFHALGDPDEEFSFSDGEIAEAAWFTRDEVRAALAAGDWSSASESKLLLPGSISIARVIIESWAACE.

Arg111 serves as a coordination point for substrate. Residues 168 to 293 (PRIDPAVICL…DWSSASESKL (126 aa)) enclose the Nudix hydrolase domain. Ala202, Glu218, and Glu222 together coordinate a divalent metal cation. The short motif at 203–224 (GFVEAGESFEVCVAREIREEIG) is the Nudix box element. Residue 236 to 243 (QQWPFPRS) coordinates substrate. Residue Glu264 coordinates a divalent metal cation.

The protein belongs to the Nudix hydrolase family. NudC subfamily. In terms of assembly, homodimer. Requires Mg(2+) as cofactor. It depends on Mn(2+) as a cofactor.

The catalysed reaction is a 5'-end NAD(+)-phospho-ribonucleoside in mRNA + H2O = a 5'-end phospho-adenosine-phospho-ribonucleoside in mRNA + beta-nicotinamide D-ribonucleotide + 2 H(+). It carries out the reaction NAD(+) + H2O = beta-nicotinamide D-ribonucleotide + AMP + 2 H(+). It catalyses the reaction NADH + H2O = reduced beta-nicotinamide D-ribonucleotide + AMP + 2 H(+). MRNA decapping enzyme that specifically removes the nicotinamide adenine dinucleotide (NAD) cap from a subset of mRNAs by hydrolyzing the diphosphate linkage to produce nicotinamide mononucleotide (NMN) and 5' monophosphate mRNA. The NAD-cap is present at the 5'-end of some mRNAs and stabilizes RNA against 5'-processing. Has preference for mRNAs with a 5'-end purine. Catalyzes the hydrolysis of a broad range of dinucleotide pyrophosphates. The sequence is that of NAD-capped RNA hydrolase NudC from Mycobacterium tuberculosis (strain ATCC 25177 / H37Ra).